We begin with the raw amino-acid sequence, 847 residues long: B-cell receptor CD22 (847 aa).

Positions 1 to 19 (MHLLGPWLLLLVLEYLAFS) are cleaved as a signal peptide. The Ig-like V-type domain occupies 20 to 138 (DSSKWVFEHP…MERIHLNVSE (119 aa)). Residues 20–687 (DSSKWVFEHP…YYSPETIGRR (668 aa)) lie on the Extracellular side of the membrane. Cystine bridges form between Cys39–Cys167, Cys44–Cys102, and Cys161–Cys219. N-linked (GlcNAc...) asparagine glycosylation is found at Asn67, Asn101, and Asn112. Position 120 (Arg120) interacts with N-acetylneuraminate. 3 N-linked (GlcNAc...) asparagine glycosylation sites follow: Asn135, Asn164, and Asn231. Ig-like C2-type domains lie at 143 to 235 (PHIQ…DTVQ), 242 to 326 (PKLE…VFLQ), 331 to 416 (PEPS…LDVQ), 419 to 500 (PKKV…VALN), 505 to 582 (PRDV…QTAS), and 593 to 676 (PRRL…STLT). Intrachain disulfides connect Cys265/Cys309, Cys353/Cys396, Cys442/Cys484, and Cys529/Cys571. Asn363, Asn445, and Asn479 each carry an N-linked (GlcNAc...) asparagine glycan. Asn574 and Asn634 each carry an N-linked (GlcNAc...) asparagine glycan. An intrachain disulfide couples Cys616 to Cys659. The chain crosses the membrane as a helical span at residues 688 to 706 (VAVGLGSCLAILILAICGL). Over 707-847 (KLQRRWKRTQ…ENVDYVILKH (141 aa)) the chain is Cytoplasmic. Residues Ser725, Ser726, and Ser729 each carry the phosphoserine modification. 2 short sequence motifs (ITIM motif) span residues 760 to 765 (ISYTTL) and 794 to 799 (VTYSAL). Tyr762 bears the Phosphotyrosine mark. Phosphotyrosine is present on residues Tyr807, Tyr822, and Tyr842. 2 short sequence motifs (ITIM motif) span residues 820-825 (IHYSEL) and 840-845 (VDYVIL).

It belongs to the immunoglobulin superfamily. SIGLEC (sialic acid binding Ig-like lectin) family. Predominantly monomer of isoform CD22-beta. Also found as heterodimer of isoform CD22-beta and a shorter isoform. Interacts with PTPN6/SHP-1, LYN, SYK, PIK3R1/PIK3R2 and PLCG1 upon phosphorylation. Interacts with GRB2, INPP5D and SHC1 upon phosphorylation. May form a complex with INPP5D/SHIP, GRB2 and SHC1. Phosphorylation of Tyr-762, Tyr-807 and Tyr-822 are involved in binding to SYK, GRB2 and SYK, respectively. Phosphorylation of Tyr-842 is involved in binding to SYK, PLCG2 and PIK3R1/PIK3R2. In terms of processing, phosphorylated on tyrosine residues by LYN. In terms of tissue distribution, B-lymphocytes.

The protein resides in the cell membrane. Functionally, most highly expressed siglec (sialic acid-binding immunoglobulin-like lectin) on B-cells that plays a role in various aspects of B-cell biology including differentiation, antigen presentation, and trafficking to bone marrow. Binds to alpha 2,6-linked sialic acid residues of surface molecules such as CD22 itself, CD45 and IgM in a cis configuration. Can also bind to ligands on other cells as an adhesion molecule in a trans configuration. Acts as an inhibitory coreceptor on the surface of B-cells and inhibits B-cell receptor induced signaling, characterized by inhibition of the calcium mobilization and cellular activation. Mechanistically, the immunoreceptor tyrosine-based inhibitory motif domain is phosphorylated by the Src kinase LYN, which in turn leads to the recruitment of the protein tyrosine phosphatase 1/PTPN6, leading to the negative regulation of BCR signaling. If this negative signaling from is of sufficient strength, apoptosis of the B-cell can be induced. The polypeptide is B-cell receptor CD22 (Homo sapiens (Human)).